The sequence spans 365 residues: tRNA/tmRNA (uracil-C(5))-methyltransferase (365 aa).

Glutamine 189, tyrosine 217, asparagine 222, glutamate 238, and aspartate 298 together coordinate S-adenosyl-L-methionine. Cysteine 323 functions as the Nucleophile in the catalytic mechanism. Glutamate 357 functions as the Proton acceptor in the catalytic mechanism.

This sequence belongs to the class I-like SAM-binding methyltransferase superfamily. RNA M5U methyltransferase family. TrmA subfamily.

The catalysed reaction is uridine(54) in tRNA + S-adenosyl-L-methionine = 5-methyluridine(54) in tRNA + S-adenosyl-L-homocysteine + H(+). It catalyses the reaction uridine(341) in tmRNA + S-adenosyl-L-methionine = 5-methyluridine(341) in tmRNA + S-adenosyl-L-homocysteine + H(+). In terms of biological role, dual-specificity methyltransferase that catalyzes the formation of 5-methyluridine at position 54 (m5U54) in all tRNAs, and that of position 341 (m5U341) in tmRNA (transfer-mRNA). The chain is tRNA/tmRNA (uracil-C(5))-methyltransferase from Shewanella sp. (strain MR-4).